Here is a 353-residue protein sequence, read N- to C-terminus: ATPase GET3A (353 aa).

Position 27 to 34 (27 to 34) interacts with ATP; that stretch reads KGGVGKTT. The active site involves D56. The ATP site is built by E226 and N253. A coiled-coil region spans residues 320 to 353; sequence TTSRSNVEELERKVHTLRLQLKTAEEELERVKSG.

Belongs to the arsA ATPase family. Homodimer. Interacts with GET1 and GET4.

Its subcellular location is the cytoplasm. The protein localises to the cytosol. It is found in the endoplasmic reticulum. It catalyses the reaction ATP + H2O = ADP + phosphate + H(+). In terms of biological role, ATPase required for the post-translational delivery of tail-anchored (TA) proteins to the endoplasmic reticulum. Recognizes and selectively binds the transmembrane domain of TA proteins in the cytosol. This complex then targets to the endoplasmic reticulum by membrane-bound receptors, where the tail-anchored protein is released for insertion. This process is regulated by ATP binding and hydrolysis. ATP binding drives the homodimer towards the closed dimer state, facilitating recognition of newly synthesized TA membrane proteins. ATP hydrolysis is required for insertion. Subsequently, the homodimer reverts towards the open dimer state, lowering its affinity for the membrane-bound receptor, and returning it to the cytosol to initiate a new round of targeting. Involved in the control of root hair growth through the regulation of syntaxin SYP123 expression. This is ATPase GET3A from Arabidopsis thaliana (Mouse-ear cress).